The sequence spans 205 residues: MSRLNIEQVYKEAQALLEGHFLLSSGNHSNFYLQSAKVLENPKVAESLAKALAEEIRAFGLTIDTVCSPALGGVLAGYELARALGVRFIFTERVEGKMTLRRGFEVASGEKILICEDIITTGGSAVESAMEVERLGAQVVGYAALANRGFCQRVGSSLERKPNAKLPPHLPFFALDDFVFDLYSPQDCPLCKTGSKPIKPGSRGN.

5-phospho-alpha-D-ribose 1-diphosphate is bound at residue 116–124 (EDIITTGGS). Orotate contacts are provided by threonine 120 and arginine 148.

The protein belongs to the purine/pyrimidine phosphoribosyltransferase family. PyrE subfamily. As to quaternary structure, homodimer. Requires Mg(2+) as cofactor.

It catalyses the reaction orotidine 5'-phosphate + diphosphate = orotate + 5-phospho-alpha-D-ribose 1-diphosphate. It participates in pyrimidine metabolism; UMP biosynthesis via de novo pathway; UMP from orotate: step 1/2. In terms of biological role, catalyzes the transfer of a ribosyl phosphate group from 5-phosphoribose 1-diphosphate to orotate, leading to the formation of orotidine monophosphate (OMP). The protein is Orotate phosphoribosyltransferase of Wolinella succinogenes (strain ATCC 29543 / DSM 1740 / CCUG 13145 / JCM 31913 / LMG 7466 / NCTC 11488 / FDC 602W) (Vibrio succinogenes).